Reading from the N-terminus, the 238-residue chain is Auxin-responsive protein IAA2 (238 aa).

The short motif at 24–28 is the EAR-like (transcriptional repression) element; that stretch reads LCLGL. 3 stretches are compositionally biased toward low complexity: residues 33–44, 59–69, and 85–94; these read SSSSSSKPSEGS, ASKPSGAAAAA, and ASSSSSSSKQ. Disordered regions lie at residues 33 to 69 and 82 to 114; these read SSSS…AAAA and RNLA…KDGG. The PB1 domain maps to 118–216; the sequence is GMFVKINMDG…TAKRLRVLKS (99 aa). The tract at residues 217-238 is disordered; it reads SDLPPPSLMRAAGSRKRAAADS. The segment covering 229–238 has biased composition (basic residues); it reads GSRKRAAADS.

Belongs to the Aux/IAA family. As to quaternary structure, homodimers and heterodimers. As to expression, highly expressed in flowers.

Its subcellular location is the nucleus. Aux/IAA proteins are short-lived transcriptional factors that function as repressors of early auxin response genes at low auxin concentrations. In Oryza sativa subsp. japonica (Rice), this protein is Auxin-responsive protein IAA2 (IAA2).